Reading from the N-terminus, the 131-residue chain is Large-conductance mechanosensitive channel (131 aa).

3 consecutive transmembrane segments (helical) span residues 8-28 (FALK…GAFG), 30-50 (IVTS…VGGI), and 72-92 (GQFI…FMFI).

The protein belongs to the MscL family. As to quaternary structure, homopentamer.

It is found in the cell membrane. Channel that opens in response to stretch forces in the membrane lipid bilayer. May participate in the regulation of osmotic pressure changes within the cell. The sequence is that of Large-conductance mechanosensitive channel from Alkaliphilus oremlandii (strain OhILAs) (Clostridium oremlandii (strain OhILAs)).